Here is a 401-residue protein sequence, read N- to C-terminus: Probable sodium/metabolite cotransporter BASS1, chloroplastic (401 aa).

The N-terminal 70 residues, 1–70 (MASAISLSLL…RRSRFDFVPR (70 aa)), are a transit peptide targeting the chloroplast. 9 helical membrane-spanning segments follow: residues 92–112 (FVGE…CLLG), 122–142 (VTPN…GMTL), 156–176 (ELFA…FFVS), 187–207 (AGLI…VTYI), 212–232 (VALS…MTPL), 247–267 (LGLL…GAFL), 278–298 (VSPV…GYAI), 311–331 (QVVL…YLFS), and 371–391 (VPCA…AGIW).

It belongs to the bile acid:sodium symporter (BASS) (TC 2.A.28) family.

The protein localises to the membrane. The protein resides in the plastid. It is found in the chloroplast envelope. In terms of biological role, may function as sodium-coupled metabolite transporter across the chloroplast envelope. The chain is Probable sodium/metabolite cotransporter BASS1, chloroplastic (BASS1) from Arabidopsis thaliana (Mouse-ear cress).